Consider the following 257-residue polypeptide: uncharacterized protein (257 aa).

Catalysis depends on charge relay system residues serine 122 and histidine 236.

This sequence belongs to the peptidase S9B family.

This is an uncharacterized protein from Bacillus subtilis (strain 168).